The following is a 442-amino-acid chain: tRNA(Ile)-lysidine synthase (442 aa).

Serine 30–serine 35 is a binding site for ATP.

Belongs to the tRNA(Ile)-lysidine synthase family.

The protein resides in the cytoplasm. The catalysed reaction is cytidine(34) in tRNA(Ile2) + L-lysine + ATP = lysidine(34) in tRNA(Ile2) + AMP + diphosphate + H(+). In terms of biological role, ligates lysine onto the cytidine present at position 34 of the AUA codon-specific tRNA(Ile) that contains the anticodon CAU, in an ATP-dependent manner. Cytidine is converted to lysidine, thus changing the amino acid specificity of the tRNA from methionine to isoleucine. The sequence is that of tRNA(Ile)-lysidine synthase from Pseudomonas fluorescens (strain Pf0-1).